The sequence spans 507 residues: Glycerol kinase (507 aa).

Position 14 (Thr-14) interacts with ADP. Residues Thr-14, Thr-15, and Ser-16 each contribute to the ATP site. Position 14 (Thr-14) interacts with sn-glycerol 3-phosphate. Arg-18 serves as a coordination point for ADP. Sn-glycerol 3-phosphate-binding residues include Arg-84, Glu-85, Tyr-137, and Asp-247. Positions 84, 85, 137, 247, and 248 each coordinate glycerol. Thr-269 and Gly-312 together coordinate ADP. The ATP site is built by Thr-269, Gly-312, Gln-316, and Gly-413. ADP is bound by residues Gly-413 and Asn-417.

This sequence belongs to the FGGY kinase family.

The enzyme catalyses glycerol + ATP = sn-glycerol 3-phosphate + ADP + H(+). Its pathway is polyol metabolism; glycerol degradation via glycerol kinase pathway; sn-glycerol 3-phosphate from glycerol: step 1/1. Its activity is regulated as follows. Inhibited by fructose 1,6-bisphosphate (FBP). Its function is as follows. Key enzyme in the regulation of glycerol uptake and metabolism. Catalyzes the phosphorylation of glycerol to yield sn-glycerol 3-phosphate. The protein is Glycerol kinase of Psychromonas ingrahamii (strain DSM 17664 / CCUG 51855 / 37).